The following is a 357-amino-acid chain: MEWLNVLESQGQALLGPTAWLVVWTIIKIVIIAVPIILCVAYLTYWERKMIGWMHVRLGPNRVGFKGLLQPFADVFKLLTKEVVVPSQANKILFIVAPVVTLMPALAAWAVVPFGPEAVLANVNAGLLYVMAITSIGVYGVIVAGWASNSKYAFLGALRASAQMVSYELAISFVLVTVLLVSGSLNMNEIVLGQGRGWFAERGLTFLSWNWLPLLPLFVIYVISAVAETNRHPFDVVEGESEIVAGHMVEYSGMAFALFFLGEYANMILLSAMASIMFLGGWMSPIDIAPLNWIPGWIWLGIKTFFVVSLFIWFRASFPRYRYDQIMRLGWKIFIPLTGVWLVVVAIWMQTPWNIWR.

A run of 8 helical transmembrane segments spans residues 20 to 40 (WLVV…ILCV), 92 to 112 (ILFI…WAVV), 127 to 147 (LLYV…AGWA), 165 to 185 (VSYE…SGSL), 206 to 226 (FLSW…ISAV), 268 to 288 (ILLS…PIDI), 294 to 314 (IPGW…FIWF), and 329 to 349 (LGWK…AIWM).

This sequence belongs to the complex I subunit 1 family. NDH-1 is composed of 14 different subunits. Subunits NuoA, H, J, K, L, M, N constitute the membrane sector of the complex.

The protein localises to the cell inner membrane. It catalyses the reaction a quinone + NADH + 5 H(+)(in) = a quinol + NAD(+) + 4 H(+)(out). Its function is as follows. NDH-1 shuttles electrons from NADH, via FMN and iron-sulfur (Fe-S) centers, to quinones in the respiratory chain. The immediate electron acceptor for the enzyme in this species is believed to be ubiquinone. Couples the redox reaction to proton translocation (for every two electrons transferred, four hydrogen ions are translocated across the cytoplasmic membrane), and thus conserves the redox energy in a proton gradient. This subunit may bind ubiquinone. This chain is NADH-quinone oxidoreductase subunit H, found in Bordetella avium (strain 197N).